Consider the following 299-residue polypeptide: Elongation factor Ts, mitochondrial (299 aa).

Residues 1-18 (MLFQRRLHFHQFFGKTRV) constitute a mitochondrion transit peptide.

The protein belongs to the EF-Ts family.

The protein resides in the mitochondrion. Associates with the EF-Tu.GDP complex and induces the exchange of GDP to GTP. It remains bound to the aminoacyl-tRNA.EF-Tu.GTP complex up to the GTP hydrolysis stage on the ribosome. In Schizosaccharomyces pombe (strain 972 / ATCC 24843) (Fission yeast), this protein is Elongation factor Ts, mitochondrial (tsf1).